Consider the following 300-residue polypeptide: ETS homologous factor (300 aa).

Residues 29–115 enclose the PNT domain; that stretch reads STCNVSSGFF…SNLQHLKWNG (87 aa). A disordered region spans residues 183–202; it reads ESPDMKKEQDPPAKCHTKKH. Positions 185 to 195 are enriched in basic and acidic residues; sequence PDMKKEQDPPA. The ETS DNA-binding region spans 207 to 289; sequence THLWEFIRDI…DGRRLVYKFG (83 aa).

It belongs to the ETS family.

Its subcellular location is the nucleus. Transcriptional activator that may play a role in regulating epithelial cell differentiation and proliferation. May act as a repressor for a specific subset of ETS/AP-1-responsive genes, and as a modulator of the nuclear response to mitogen-activated protein kinase signaling cascades. Binds to DNA sequences containing the consensus nucleotide core sequence GGAA. Involved in regulation of TNFRSF10B/DR5 expression through Ets-binding sequences on the TNFRSF10B/DR5 promoter. This is ETS homologous factor (EHF) from Pan troglodytes (Chimpanzee).